Here is a 203-residue protein sequence, read N- to C-terminus: Xrcc4-like factor 1 (203 aa).

It belongs to the XRCC4-XLF family. XLF subfamily.

Its subcellular location is the nucleus. In terms of biological role, involved in double-strand break repair via non-homologous end joining (NHEJ); the repair of a double-strand break in DNA in which the two broken ends are rejoined with little or no sequence complementarity. Has a role in meiosis. The protein is Xrcc4-like factor 1 (xlf1) of Schizosaccharomyces pombe (strain 972 / ATCC 24843) (Fission yeast).